We begin with the raw amino-acid sequence, 494 residues long: Sulfate adenylyltransferase subunit 1 (494 aa).

In terms of domain architecture, tr-type G spans 24–240 (TRPLRLITCG…LELATVRSAQ (217 aa)). The interval 33–40 (GSVDDGKS) is G1. 33 to 40 (GSVDDGKS) provides a ligand contact to GTP. Residues 91–95 (GITID) form a G2 region. Residues 112–115 (DTPG) form a G3 region. Residues 112 to 116 (DTPGH) and 167 to 170 (NKID) contribute to the GTP site. Residues 167 to 170 (NKID) are G4. The interval 204–206 (SAL) is G5.

The protein belongs to the TRAFAC class translation factor GTPase superfamily. Classic translation factor GTPase family. CysN/NodQ subfamily. As to quaternary structure, heterodimer composed of CysD, the smaller subunit, and CysN.

The catalysed reaction is sulfate + ATP + H(+) = adenosine 5'-phosphosulfate + diphosphate. It functions in the pathway sulfur metabolism; hydrogen sulfide biosynthesis; sulfite from sulfate: step 1/3. In terms of biological role, with CysD forms the ATP sulfurylase (ATPS) that catalyzes the adenylation of sulfate producing adenosine 5'-phosphosulfate (APS) and diphosphate, the first enzymatic step in sulfur assimilation pathway. APS synthesis involves the formation of a high-energy phosphoric-sulfuric acid anhydride bond driven by GTP hydrolysis by CysN coupled to ATP hydrolysis by CysD. The sequence is that of Sulfate adenylyltransferase subunit 1 from Rhizobium rhizogenes (strain K84 / ATCC BAA-868) (Agrobacterium radiobacter).